The primary structure comprises 311 residues: MLEHKPVLLKESLDYLKCKENGIYIDATLGRGGHTEEIIKAINDRGLVIGIDRDHEAIESVKKRLKKYSSLRTVHDNFTNIPFILEQFNIKAVDGMLFDLGVSSPQFDNPERGFSYRKEGPLDMRMDKNQELTAEYIVNNFSHEELTNIFKEYGEERWASRIANFIIKSRQHKPIKTTLQLTTIIKDAIPASARRKGGHPARRTFQALRIATNDELNILKKTINHVVKFLKPGGRICIISFHSLEDRIVKKTFRELARDCVCPPDFPECVCDHKRKLKIITKKPVKPGENEVENNPRARSARLRVAERVLN.

Residues glycine 32 to histidine 34, aspartate 52, phenylalanine 78, aspartate 99, and glutamine 106 contribute to the S-adenosyl-L-methionine site.

It belongs to the methyltransferase superfamily. RsmH family.

The protein resides in the cytoplasm. The enzyme catalyses cytidine(1402) in 16S rRNA + S-adenosyl-L-methionine = N(4)-methylcytidine(1402) in 16S rRNA + S-adenosyl-L-homocysteine + H(+). Functionally, specifically methylates the N4 position of cytidine in position 1402 (C1402) of 16S rRNA. This chain is Ribosomal RNA small subunit methyltransferase H, found in Halothermothrix orenii (strain H 168 / OCM 544 / DSM 9562).